A 131-amino-acid polypeptide reads, in one-letter code: Large ribosomal subunit protein bL17 (131 aa).

It belongs to the bacterial ribosomal protein bL17 family. As to quaternary structure, part of the 50S ribosomal subunit. Contacts protein L32.

The sequence is that of Large ribosomal subunit protein bL17 from Burkholderia multivorans (strain ATCC 17616 / 249).